Reading from the N-terminus, the 207-residue chain is Probable flagellin 2 (207 aa).

Positions 1–14 are excised as a propeptide; it reads MRVGSRKLRRDEKG.

It belongs to the archaeal flagellin family.

The protein localises to the archaeal flagellum. Flagellin is the subunit protein which polymerizes to form the filaments of archaeal flagella. The polypeptide is Probable flagellin 2 (flaB2) (Archaeoglobus fulgidus (strain ATCC 49558 / DSM 4304 / JCM 9628 / NBRC 100126 / VC-16)).